The following is a 421-amino-acid chain: Histidine--tRNA ligase (421 aa).

This sequence belongs to the class-II aminoacyl-tRNA synthetase family. Homodimer.

It is found in the cytoplasm. It catalyses the reaction tRNA(His) + L-histidine + ATP = L-histidyl-tRNA(His) + AMP + diphosphate + H(+). In Ureaplasma urealyticum serovar 10 (strain ATCC 33699 / Western), this protein is Histidine--tRNA ligase.